The chain runs to 315 residues: WD repeat domain-containing protein 83 (315 aa).

7 WD repeats span residues 23–62 (CQQG…LLKT), 65–104 (GHGY…VTRK), 107–146 (GHAG…MEPI), 151–188 (ESQD…LQVD), 189–228 (YIGS…MLGE), 233–272 (VNKG…LTLK), and 275–313 (VGKA…AAEN).

This sequence belongs to the WD repeat MORG1 family.

It is found in the cytoplasm. Its function is as follows. Molecular scaffold protein for various multimeric protein complexes. Acts as a module in the assembly of a multicomponent scaffold for the ERK pathway, linking ERK responses to specific agonists. Also involved in response to hypoxia by acting as a negative regulator of HIF1A/HIF-1-alpha. The sequence is that of WD repeat domain-containing protein 83 (wdr83) from Danio rerio (Zebrafish).